The following is a 254-amino-acid chain: Phosphonates import ATP-binding protein PhnC 2 (254 aa).

The ABC transporter domain maps to 4-248; that stretch reads LEVNNLGKHY…KIESIYGFQQ (245 aa). ATP is bound at residue 37 to 44; it reads GPSGAGKS.

This sequence belongs to the ABC transporter superfamily. Phosphonates importer (TC 3.A.1.9.1) family. In terms of assembly, the complex is composed of two ATP-binding proteins (PhnC), two transmembrane proteins (PhnE) and a solute-binding protein (PhnD).

The protein localises to the cell membrane. The enzyme catalyses phosphonate(out) + ATP + H2O = phosphonate(in) + ADP + phosphate + H(+). Functionally, part of the ABC transporter complex PhnCDE involved in phosphonates import. Responsible for energy coupling to the transport system. The chain is Phosphonates import ATP-binding protein PhnC 2 from Oceanobacillus iheyensis (strain DSM 14371 / CIP 107618 / JCM 11309 / KCTC 3954 / HTE831).